The sequence spans 72 residues: Protein kish-A (72 aa).

The signal sequence occupies residues 1–26; that stretch reads MSAIFNFQSLLIVILLLICTCAYLRS. The Extracellular segment spans residues 27–53; the sequence is LVPNLLDKNKTGVLGIFWKCARIGERK. A glycan (N-linked (GlcNAc...) asparagine) is linked at Asn-35. The chain crosses the membrane as a helical span at residues 54–71; sequence SPYVAVCCVVMAFSILFM. A topological domain (cytoplasmic) is located at residue Gln-72.

The protein belongs to the KISH family.

Its subcellular location is the golgi apparatus membrane. Involved in the early part of the secretory pathway. The polypeptide is Protein kish-A (tmem167a) (Xenopus laevis (African clawed frog)).